Reading from the N-terminus, the 774-residue chain is Penicillin acylase 2 proenzyme (774 aa).

Residue Ser-240 is the Nucleophile of the active site.

The protein belongs to the peptidase S45 family. In terms of assembly, heterodimer of a small subunit and a large subunit processed from the same precursor.

The catalysed reaction is a penicillin + H2O = 6-aminopenicillanate + a carboxylate. The polypeptide is Penicillin acylase 2 proenzyme (acyII) (Pseudomonas sp. (strain SE83)).